Reading from the N-terminus, the 90-residue chain is uncharacterized protein (90 aa).

Positions 1–18 (MKTLPVLVLSLTLLTVFS) are cleaved as a signal peptide. A disordered region spans residues 28-50 (QAKQLLRSRRQDRPSKPGFPDEP).

It is found in the secreted. This is an uncharacterized protein from Homo sapiens (Human).